We begin with the raw amino-acid sequence, 836 residues long: ATP-binding cassette sub-family B member 6 (836 aa).

Residues 1–26 (MVTVGNYCEAEGPAGPAWTQNGLSPC) are Lumenal-facing. The segment at 1 to 205 (MVTVGNYCEA…SGGLFILGLW (205 aa)) is required for the lysosomal targeting. A required for ATPase activity region spans residues 1–236 (MVTVGNYCEA…RNQGRSTDPR (236 aa)). A disulfide bridge connects residues Cys8 and Cys26. The helical transmembrane segment at 27 to 47 (FFYTLVPSTLMTLGVLALVLV) threads the bilayer. Topologically, residues 48–72 (LPCRRREVPAGTEELSWAAGPRVAP) are cytoplasmic. Residues 73-93 (YALQLSLAILQMALPLASLAG) traverse the membrane as a helical segment. The Lumenal portion of the chain corresponds to 94-106 (RVGTARGVRLPGY). Residues 107-127 (LLLASVLESLASACGLWLLVV) form a helical membrane-spanning segment. Topologically, residues 128–147 (ERSQARQSLAMGVWMKFRHS) are cytoplasmic. The helical transmembrane segment at 148–168 (LGLLLLWTVTFAAENLVLVSW) threads the bilayer. The Lumenal segment spans residues 169–185 (NSPQWWWSRADLGQQVQ). A helical transmembrane segment spans residues 186–206 (FGLWVLRYMTSGGLFILGLWA). At 207–264 (PGLRPQSYTLHVNEEDQDGGRNQGRSTDPRSTWRDLGRKLRLLSGYLWPRGSPSLQLT) the chain is on the cytoplasmic side. A helical transmembrane segment spans residues 265 to 285 (VLLCMGLMGLDRALNVLVPIF). An ABC transmembrane type-1 domain is found at 265 to 556 (VLLCMGLMGL…FGTYYRMIQT (292 aa)). Over 286–305 (YRDIVNLLTSKAPWSSLAWT) the chain is Lumenal. The helical transmembrane segment at 306-326 (VTTYVFLKFLQGGGTGSTGFV) threads the bilayer. Residues 327 to 375 (SNLRTFLWIRVQQFTSRGVELRLFSHLHELSLRWHLGRRTGEVLRIVDR) lie on the Cytoplasmic side of the membrane. A helical transmembrane segment spans residues 376-396 (GTSSVTGLLSYLVFNIIPTLA). A topological domain (lumenal) is located at residue Asp397. A helical transmembrane segment spans residues 398–418 (IIIGIIYFSMFFNAWFGLIVF). Topologically, residues 419–499 (LCMSLYLILT…STASLVLLNQ (81 aa)) are cytoplasmic. A helical membrane pass occupies residues 500 to 520 (TQNMVIGFGLLAGSLLCAYFV). The Lumenal segment spans residues 521–529 (SERRLQVGD). The chain crosses the membrane as a helical span at residues 530-550 (FVLFGTYITQLYMPLNWFGTY). Topologically, residues 551 to 836 (YRMIQTNFID…QGQETVPEDS (286 aa)) are cytoplasmic. Positions 590–824 (VEFENVHFSY…GGVYAEMWQL (235 aa)) constitute an ABC transporter domain. ATP is bound by residues Tyr599 and 623–634 (GPSGAGKSTILR).

It belongs to the ABC transporter superfamily. ABCB family. Heavy Metal importer (TC 3.A.1.210) subfamily. In terms of assembly, homodimer. Post-translationally, N-glycosylated. As to expression, ubiquitously expressed. Highly expressed in testis by meiotic pachytene spermatocytes and post-meiotic early spermatids.

Its subcellular location is the cell membrane. It localises to the mitochondrion outer membrane. The protein localises to the endoplasmic reticulum membrane. It is found in the golgi apparatus membrane. The protein resides in the endosome membrane. Its subcellular location is the lysosome membrane. It localises to the late endosome membrane. The protein localises to the early endosome membrane. It is found in the secreted. The protein resides in the extracellular exosome. Its subcellular location is the mitochondrion. It localises to the endosome. The protein localises to the multivesicular body membrane. It is found in the melanosome membrane. It catalyses the reaction heme b(in) + ATP + H2O = heme b(out) + ADP + phosphate + H(+). The enzyme catalyses coproporphyrin III(in) + ATP + H2O = coproporphyrin III(out) + ADP + phosphate + H(+). It carries out the reaction pheophorbide a(in) + ATP + H2O = pheophorbide a(out) + ADP + phosphate + H(+). The catalysed reaction is coproporphyrinogen III(in) + ATP + H2O = coproporphyrinogen III(out) + ADP + phosphate + H(+). It catalyses the reaction protoporphyrin IX(in) + ATP + H2O = protoporphyrin IX(out) + ADP + phosphate + H(+). The enzyme catalyses coproporphyrin I(in) + ATP + H2O = coproporphyrin I(out) + ADP + phosphate + H(+). It carries out the reaction uroporphyrin I(in) + ATP + H2O = uroporphyrin I(out) + ADP + phosphate + H(+). The catalysed reaction is uroporphyrin III(in) + ATP + H2O = uroporphyrin III(out) + ADP + phosphate + H(+). In terms of biological role, ATP-dependent transporter that catalyzes the transport of a broad-spectrum of porphyrins from the cytoplasm to the extracellular space through the plasma membrane or into the vesicle lumen. May also function as an ATP-dependent importer of porphyrins from the cytoplasm into the mitochondria, in turn may participate in the de novo heme biosynthesis regulation and in the coordination of heme and iron homeostasis during phenylhydrazine stress. May play a key role in the early steps of melanogenesis producing PMEL amyloid fibrils. In vitro, it confers to cells a resistance to toxic metal such as arsenic and cadmium and against chemotherapeutics agent such as 5-fluorouracil, SN-38 and vincristin. In addition may play a role in the transition metal homeostasis. The chain is ATP-binding cassette sub-family B member 6 from Rattus norvegicus (Rat).